A 283-amino-acid chain; its full sequence is tRNA-cytidine(32) 2-sulfurtransferase (283 aa).

A PP-loop motif motif is present at residues 32 to 37 (SGGKDS). The [4Fe-4S] cluster site is built by cysteine 107, cysteine 110, and cysteine 198.

It belongs to the TtcA family. In terms of assembly, homodimer. Requires Mg(2+) as cofactor. [4Fe-4S] cluster is required as a cofactor.

The protein resides in the cytoplasm. It catalyses the reaction cytidine(32) in tRNA + S-sulfanyl-L-cysteinyl-[cysteine desulfurase] + AH2 + ATP = 2-thiocytidine(32) in tRNA + L-cysteinyl-[cysteine desulfurase] + A + AMP + diphosphate + H(+). Its pathway is tRNA modification. Catalyzes the ATP-dependent 2-thiolation of cytidine in position 32 of tRNA, to form 2-thiocytidine (s(2)C32). The sulfur atoms are provided by the cysteine/cysteine desulfurase (IscS) system. The sequence is that of tRNA-cytidine(32) 2-sulfurtransferase from Sorangium cellulosum (strain So ce56) (Polyangium cellulosum (strain So ce56)).